We begin with the raw amino-acid sequence, 518 residues long: Glutamate--cysteine ligase (518 aa).

It belongs to the glutamate--cysteine ligase type 1 family. Type 1 subfamily.

It carries out the reaction L-cysteine + L-glutamate + ATP = gamma-L-glutamyl-L-cysteine + ADP + phosphate + H(+). The protein operates within sulfur metabolism; glutathione biosynthesis; glutathione from L-cysteine and L-glutamate: step 1/2. This is Glutamate--cysteine ligase from Shigella flexneri serotype 5b (strain 8401).